A 179-amino-acid chain; its full sequence is Replication restart protein DnaT (179 aa).

The tract at residues 155–179 is disordered; sequence NGGLPKRDVNTVSEPDSQIPPGFRG.

The protein belongs to the DnaT family. In terms of assembly, homooligomerizes. Interacts with PriB. Component of the replication restart primosome. Primosome assembly occurs via a 'hand-off' mechanism. PriA binds to replication forks, subsequently PriB then DnaT bind; DnaT then displaces ssDNA to generate the helicase loading substrate.

Its function is as follows. Involved in the restart of stalled replication forks, which reloads the replicative helicase on sites other than the origin of replication. Can function in multiple replication restart pathways. Displaces ssDNA from a PriB-ssDNA complex. Probably forms a spiral filament on ssDNA. This chain is Replication restart protein DnaT, found in Escherichia coli O8 (strain IAI1).